We begin with the raw amino-acid sequence, 600 residues long: Adenine deaminase 4 (600 aa).

The protein belongs to the metallo-dependent hydrolases superfamily. Adenine deaminase family. It depends on Mn(2+) as a cofactor.

It carries out the reaction adenine + H2O + H(+) = hypoxanthine + NH4(+). The polypeptide is Adenine deaminase 4 (Rhizobium meliloti (strain 1021) (Ensifer meliloti)).